Here is a 1025-residue protein sequence, read N- to C-terminus: Fanconi-associated nuclease 1 (1025 aa).

Residues 40-68 (KLACPICSKMVPRYDLNWHLDEKCANNDN) form a UBZ4-type zinc finger. 4 residues coordinate Zn(2+): cysteine 43, cysteine 46, histidine 58, and cysteine 63. Residues 98-120 (TPGKLSPSKASLTPDPSDSAKMG) form a disordered region. The residue at position 182 (serine 182) is a Phosphoserine. A coiled-coil region spans residues 682–704 (VEILQRLHMYEEAVKELESLLSQ). 4 residues coordinate Mn(2+): glutamate 842, aspartate 968, glutamate 983, and valine 984. The 113-residue stretch at 903-1015 (AESLRAWVAA…GADVEVCHVV (113 aa)) folds into the VRR-NUC domain.

It belongs to the FAN1 family. As to quaternary structure, interacts with FANCD2 (when monoubiquitinated). Interacts with FANCI, MLH1, MLH3 and PMS2. Mn(2+) is required as a cofactor. The cofactor is Mg(2+). In terms of processing, ubiquitinated and degraded during mitotic exit by the APC/C-Cdh1 complex.

It localises to the nucleus. The enzyme catalyses Hydrolytically removes 5'-nucleotides successively from the 3'-hydroxy termini of 3'-hydroxy-terminated oligonucleotides.. In terms of biological role, nuclease required for the repair of DNA interstrand cross-links (ICL) recruited at sites of DNA damage by monoubiquitinated FANCD2. Specifically involved in repair of ICL-induced DNA breaks by being required for efficient homologous recombination, probably in the resolution of homologous recombination intermediates. Not involved in DNA double-strand breaks resection. Acts as a 5'-3' exonuclease that anchors at a cut end of DNA and cleaves DNA successively at every third nucleotide, allowing to excise an ICL from one strand through flanking incisions. Probably keeps excising with 3'-flap annealing until it reaches and unhooks the ICL. Acts at sites that have a 5'-terminal phosphate anchor at a nick or a 1- or 2-nucleotide flap and is augmented by a 3' flap. Also has endonuclease activity toward 5'-flaps. This is Fanconi-associated nuclease 1 (FAN1) from Ailuropoda melanoleuca (Giant panda).